The chain runs to 876 residues: Leucine--tRNA ligase (876 aa).

A 'HIGH' region motif is present at residues 42 to 52 (PYPSGKLHMGH). The 'KMSKS' region signature appears at 634 to 638 (KMSKS). ATP is bound at residue K637.

The protein belongs to the class-I aminoacyl-tRNA synthetase family.

It localises to the cytoplasm. The catalysed reaction is tRNA(Leu) + L-leucine + ATP = L-leucyl-tRNA(Leu) + AMP + diphosphate. This is Leucine--tRNA ligase from Neisseria meningitidis serogroup C / serotype 2a (strain ATCC 700532 / DSM 15464 / FAM18).